Here is a 321-residue protein sequence, read N- to C-terminus: Beta-1,3-N-acetylglucosaminyltransferase manic fringe (321 aa).

Over 1 to 7 the chain is Cytoplasmic; sequence MQCRLPR. Residues 8–27 form a helical; Signal-anchor for type II membrane protein membrane-spanning segment; it reads GLAGALLTLLCMGLLCLRYH. Over 28–321 the chain is Lumenal; that stretch reads LNLSPQRVQG…TPWCPQLGAR (294 aa). R70 is a binding site for substrate. N109 is a glycosylation site (N-linked (GlcNAc...) asparagine). Intrachain disulfides connect C110-C121 and C139-C202. D143 contributes to the substrate binding site. Residue D144 participates in Mn(2+) binding. A glycan (N-linked (GlcNAc...) asparagine) is linked at N185. The active site involves D232. H256 lines the Mn(2+) pocket. A disulfide bridge connects residues C306 and C315.

Belongs to the glycosyltransferase 31 family. Mn(2+) is required as a cofactor.

Its subcellular location is the golgi apparatus membrane. It catalyses the reaction 3-O-(alpha-L-fucosyl)-L-threonyl-[EGF-like domain protein] + UDP-N-acetyl-alpha-D-glucosamine = 3-O-(N-acetyl-beta-D-glucosaminyl-(1-&gt;3)-alpha-L-fucosyl)-L-threonyl-[EGF-like domain protein] + UDP + H(+). It carries out the reaction 3-O-(alpha-L-fucosyl)-L-seryl-[EGF-like domain protein] + UDP-N-acetyl-alpha-D-glucosamine = 3-O-(N-acetyl-beta-D-glucosaminyl-(1-&gt;3)-alpha-L-fucosyl)-L-seryl-[EGF-like domain protein] + UDP + H(+). Its function is as follows. Glycosyltransferase that initiates the elongation of O-linked fucose residues attached to EGF-like repeats in the extracellular domain of Notch molecules. Modulates NOTCH1 activity by modifying O-fucose residues at specific EGF-like domains resulting in inhibition of NOTCH1 activation by JAG1 and enhancement of NOTCH1 activation by DLL1 via an increase in its binding to DLL1. This chain is Beta-1,3-N-acetylglucosaminyltransferase manic fringe, found in Homo sapiens (Human).